We begin with the raw amino-acid sequence, 95 residues long: Co-chaperonin GroES (95 aa).

Belongs to the GroES chaperonin family. Heptamer of 7 subunits arranged in a ring. Interacts with the chaperonin GroEL.

It is found in the cytoplasm. Its function is as follows. Together with the chaperonin GroEL, plays an essential role in assisting protein folding. The GroEL-GroES system forms a nano-cage that allows encapsulation of the non-native substrate proteins and provides a physical environment optimized to promote and accelerate protein folding. GroES binds to the apical surface of the GroEL ring, thereby capping the opening of the GroEL channel. The protein is Co-chaperonin GroES of Marinobacter nauticus (strain ATCC 700491 / DSM 11845 / VT8) (Marinobacter aquaeolei).